The primary structure comprises 259 residues: Zinc import ATP-binding protein ZnuC (259 aa).

An ABC transporter domain is found at 11-225 (IRLENIYVHR…PEYLAIFGGQ (215 aa)). 43–50 (GPNGAGKS) serves as a coordination point for ATP.

The protein belongs to the ABC transporter superfamily. Zinc importer (TC 3.A.1.15.5) family. As to quaternary structure, the complex is composed of two ATP-binding proteins (ZnuC), two transmembrane proteins (ZnuB) and a solute-binding protein (ZnuA).

It is found in the cell inner membrane. It carries out the reaction Zn(2+)(out) + ATP(in) + H2O(in) = Zn(2+)(in) + ADP(in) + phosphate(in) + H(+)(in). Functionally, part of the ABC transporter complex ZnuABC involved in zinc import. Responsible for energy coupling to the transport system. This is Zinc import ATP-binding protein ZnuC from Acinetobacter baylyi (strain ATCC 33305 / BD413 / ADP1).